A 113-amino-acid chain; its full sequence is Nucleoid-associated protein FMG_0513 (113 aa).

Residues 1–44 (MGNKFRGGMPGMGNMGNMMKQMQKMQRQMEETQKRLEETEVTAT) form a disordered region. The segment covering 15–26 (MGNMMKQMQKMQ) has biased composition (low complexity). Basic and acidic residues predominate over residues 27 to 38 (RQMEETQKRLEE).

The protein belongs to the YbaB/EbfC family. In terms of assembly, homodimer.

The protein localises to the cytoplasm. It localises to the nucleoid. Binds to DNA and alters its conformation. May be involved in regulation of gene expression, nucleoid organization and DNA protection. The sequence is that of Nucleoid-associated protein FMG_0513 from Finegoldia magna (strain ATCC 29328 / DSM 20472 / WAL 2508) (Peptostreptococcus magnus).